A 371-amino-acid polypeptide reads, in one-letter code: COP9 signalosome complex subunit 5 (371 aa).

In terms of domain architecture, MPN spans 51–188 (VKISAVALIK…IGAFRTYPEG (138 aa)). Zn(2+) is bound by residues His134, His136, and Asp147. A JAMM motif motif is present at residues 134 to 147 (HSHPGYGCWLSGID). A compositionally biased stretch (low complexity) spans 278-292 (NSSSKLKLKPTQPTT). 2 disordered regions span residues 278–333 (NSSS…SRIT) and 352–371 (TPLT…QGRY). The span at 293–313 (KGKETTEGSDKKLKKGEKEFS) shows a compositional bias: basic and acidic residues. Positions 323–333 (NKVTQESSRIT) are enriched in polar residues.

The protein belongs to the peptidase M67A family. CSN5 subfamily. Component of the COP9 signalosome (CSN) complex.

It is found in the cytoplasm. The protein localises to the nucleus. Catalytic Component of the COP9 signalosome (CSN) complex that acts as an regulator of the ubiquitin (Ubl) conjugation pathway by mediating the deneddylation of the cullin subunit of SCF-type E3 ubiquitin-protein ligase complexes. The sequence is that of COP9 signalosome complex subunit 5 (RRI1) from Cryptococcus neoformans var. neoformans serotype D (strain B-3501A) (Filobasidiella neoformans).